Reading from the N-terminus, the 819-residue chain is Probable beta-glucosidase G (819 aa).

An N-terminal signal peptide occupies residues 1–20; the sequence is MTSASQILVWGLLAASGAQA. N-linked (GlcNAc...) asparagine glycans are attached at residues asparagine 41, asparagine 59, asparagine 107, asparagine 228, and asparagine 277. The active site involves aspartate 305. Residues asparagine 337, asparagine 344, asparagine 351, asparagine 403, asparagine 500, asparagine 509, asparagine 554, asparagine 567, asparagine 588, asparagine 627, asparagine 683, and asparagine 719 are each glycosylated (N-linked (GlcNAc...) asparagine).

The protein belongs to the glycosyl hydrolase 3 family.

The protein localises to the secreted. It carries out the reaction Hydrolysis of terminal, non-reducing beta-D-glucosyl residues with release of beta-D-glucose.. The protein operates within glycan metabolism; cellulose degradation. In terms of biological role, beta-glucosidases are one of a number of cellulolytic enzymes involved in the degradation of cellulosic biomass. Catalyzes the last step releasing glucose from the inhibitory cellobiose. This Emericella nidulans (strain FGSC A4 / ATCC 38163 / CBS 112.46 / NRRL 194 / M139) (Aspergillus nidulans) protein is Probable beta-glucosidase G (bglG).